We begin with the raw amino-acid sequence, 345 residues long: Arginine N-succinyltransferase (345 aa).

Residue L125 participates in succinyl-CoA binding. Residue H229 is the Proton donor of the active site.

Belongs to the arginine N-succinyltransferase family.

It catalyses the reaction succinyl-CoA + L-arginine = N(2)-succinyl-L-arginine + CoA + H(+). The protein operates within amino-acid degradation; L-arginine degradation via AST pathway; L-glutamate and succinate from L-arginine: step 1/5. Its function is as follows. Catalyzes the transfer of succinyl-CoA to arginine to produce N(2)-succinylarginine. This Yersinia enterocolitica serotype O:8 / biotype 1B (strain NCTC 13174 / 8081) protein is Arginine N-succinyltransferase.